The chain runs to 223 residues: Trichome differentiation protein GL1 (223 aa).

HTH myb-type domains follow at residues 11–63 (NQEY…MNYL) and 64–118 (SPNV…SKKL). 2 consecutive DNA-binding regions (H-T-H motif) follow at residues 39 to 63 (WNRIVRKTGLKRCGKSCRLRWMNYL) and 91 to 114 (WSLIAKRVPGRTDNQVKNYWNTHL).

The protein resides in the nucleus. Functionally, regulates the production of a signal that induces hair (trichome) precursor cells on leaf primordia to differentiate. This Arabidopsis lyrata (Lyre-leaved rock-cress) protein is Trichome differentiation protein GL1 (GL1).